A 143-amino-acid chain; its full sequence is Large-conductance mechanosensitive channel (143 aa).

A run of 2 helical transmembrane segments spans residues 10 to 30 (FAVK…GAFS) and 89 to 109 (GSFI…FLMV).

It belongs to the MscL family. As to quaternary structure, homopentamer.

Its subcellular location is the cell inner membrane. Channel that opens in response to stretch forces in the membrane lipid bilayer. May participate in the regulation of osmotic pressure changes within the cell. The chain is Large-conductance mechanosensitive channel from Burkholderia pseudomallei (strain 668).